The primary structure comprises 271 residues: MKI67 FHA domain-interacting nucleolar phosphoprotein (271 aa).

The disordered stretch occupies residues 1–20 (MAEYSGPAKPTLALNPREDS). A2 carries the post-translational modification N-acetylalanine. Residue K37 forms a Glycyl lysine isopeptide (Lys-Gly) (interchain with G-Cter in SUMO2) linkage. One can recognise an RRM domain in the interval 44-122 (GVVYLGHLPS…RLLSCKFMPR (79 aa)). R113 bears the Omega-N-methylarginine mark. Glycyl lysine isopeptide (Lys-Gly) (interchain with G-Cter in SUMO2) cross-links involve residues K178 and K191. Phosphothreonine occurs at positions 213 and 217. 2 positions are modified to omega-N-methylated arginine: R223 and R224. The residue at position 226 (S226) is a Phosphoserine. Positions 242–271 (PVSPVKEDTQKTPAPESSGKKRLRKRKSKQ) are disordered. K247 is covalently cross-linked (Glycyl lysine isopeptide (Lys-Gly) (interchain with G-Cter in SUMO1); alternate). K247 is covalently cross-linked (Glycyl lysine isopeptide (Lys-Gly) (interchain with G-Cter in SUMO2); alternate). A compositionally biased stretch (basic residues) spans 261 to 271 (KKRLRKRKSKQ).

In terms of assembly, binds to the FHA domain of MKI67; this interaction is enhanced in mitosis. Post-translationally, phosphorylated.

The protein resides in the nucleus. It localises to the nucleolus. Its subcellular location is the chromosome. In Rattus norvegicus (Rat), this protein is MKI67 FHA domain-interacting nucleolar phosphoprotein (Nifk).